The primary structure comprises 372 residues: Glutamate 5-kinase (372 aa).

Lys14 serves as a coordination point for ATP. Residues Ser54, Asp141, and Asn153 each coordinate substrate. 173 to 174 (TD) provides a ligand contact to ATP. Positions 280-358 (RGHVVIDAGA…GEIETVLGYM (79 aa)) constitute a PUA domain.

This sequence belongs to the glutamate 5-kinase family.

It localises to the cytoplasm. It carries out the reaction L-glutamate + ATP = L-glutamyl 5-phosphate + ADP. It functions in the pathway amino-acid biosynthesis; L-proline biosynthesis; L-glutamate 5-semialdehyde from L-glutamate: step 1/2. Catalyzes the transfer of a phosphate group to glutamate to form L-glutamate 5-phosphate. This chain is Glutamate 5-kinase, found in Burkholderia mallei (strain NCTC 10229).